A 309-amino-acid polypeptide reads, in one-letter code: Succinoglycan biosynthesis protein ExoM (309 aa).

Belongs to the glycosyltransferase 2 family.

It is found in the cell inner membrane. It participates in glycan metabolism; exopolysaccharide biosynthesis. Glycosyltransferase required for the synthesis of succinoglycan (EPS I). Needed for the addition of the fourth sugar (glucose), catalyzes the formation of a beta-1,4 linkage between the third acetylated sugar and the fourth sugar. This is Succinoglycan biosynthesis protein ExoM (exoM) from Rhizobium meliloti (strain 1021) (Ensifer meliloti).